Reading from the N-terminus, the 96-residue chain is UPF0235 protein YggU (96 aa).

This sequence belongs to the UPF0235 family.

The sequence is that of UPF0235 protein YggU from Escherichia coli O157:H7.